The primary structure comprises 123 residues: D-ribose pyranase (123 aa).

The active-site Proton donor is His-20. Substrate contacts are provided by residues Asp-28, His-90, and 112 to 114 (YAN).

Belongs to the RbsD / FucU family. RbsD subfamily. Homodecamer.

The protein localises to the cytoplasm. The enzyme catalyses beta-D-ribopyranose = beta-D-ribofuranose. The protein operates within carbohydrate metabolism; D-ribose degradation; D-ribose 5-phosphate from beta-D-ribopyranose: step 1/2. Its function is as follows. Catalyzes the interconversion of beta-pyran and beta-furan forms of D-ribose. This Corynebacterium glutamicum (strain ATCC 13032 / DSM 20300 / JCM 1318 / BCRC 11384 / CCUG 27702 / LMG 3730 / NBRC 12168 / NCIMB 10025 / NRRL B-2784 / 534) protein is D-ribose pyranase.